Reading from the N-terminus, the 58-residue chain is Large ribosomal subunit protein uL30 (58 aa).

The protein belongs to the universal ribosomal protein uL30 family. In terms of assembly, part of the 50S ribosomal subunit.

The sequence is that of Large ribosomal subunit protein uL30 from Blochmanniella floridana.